Consider the following 372-residue polypeptide: Chaperone protein DnaJ (372 aa).

One can recognise a J domain in the interval aspartate 5–glycine 70. Residues glycine 127 to tyrosine 205 form a CR-type zinc finger. Zn(2+) contacts are provided by cysteine 140, cysteine 143, cysteine 157, cysteine 160, cysteine 179, cysteine 182, cysteine 193, and cysteine 196. 4 CXXCXGXG motif repeats span residues cysteine 140–glycine 147, cysteine 157–glycine 164, cysteine 179–glycine 186, and cysteine 193–glycine 200.

This sequence belongs to the DnaJ family. Homodimer. The cofactor is Zn(2+).

It is found in the cytoplasm. In terms of biological role, participates actively in the response to hyperosmotic and heat shock by preventing the aggregation of stress-denatured proteins and by disaggregating proteins, also in an autonomous, DnaK-independent fashion. Unfolded proteins bind initially to DnaJ; upon interaction with the DnaJ-bound protein, DnaK hydrolyzes its bound ATP, resulting in the formation of a stable complex. GrpE releases ADP from DnaK; ATP binding to DnaK triggers the release of the substrate protein, thus completing the reaction cycle. Several rounds of ATP-dependent interactions between DnaJ, DnaK and GrpE are required for fully efficient folding. Also involved, together with DnaK and GrpE, in the DNA replication of plasmids through activation of initiation proteins. The chain is Chaperone protein DnaJ from Photorhabdus laumondii subsp. laumondii (strain DSM 15139 / CIP 105565 / TT01) (Photorhabdus luminescens subsp. laumondii).